Reading from the N-terminus, the 759-residue chain is Inhibitor of nuclear factor kappa-B kinase subunit alpha (759 aa).

Residues 1 to 20 (MERGAERGPPPAPGGVALRG) form a disordered region. Residues 29-316 (WEMRDRLGTG…PETNSPKCFL (288 aa)) enclose the Protein kinase domain. ATP-binding positions include 35 to 43 (LGTGGFGNV) and Lys58. Asp158 serves as the catalytic Proton acceptor. Residues 469-490 (LLRYNANLIKMKNNMVSASQQL) form a leucine-zipper region. Residues 691-703 (TPAATWVPQSSSE) are compositionally biased toward polar residues. The segment at 691-715 (TPAATWVPQSSSEYAPHPLSSMATP) is disordered. The segment at 753-758 (FDWSWL) is NEMO-binding.

Belongs to the protein kinase superfamily. Ser/Thr protein kinase family. I-kappa-B kinase subfamily.

The protein localises to the cytoplasm. It localises to the nucleus. The enzyme catalyses L-seryl-[I-kappa-B protein] + ATP = O-phospho-L-seryl-[I-kappa-B protein] + ADP + H(+). Its activity is regulated as follows. Activated when phosphorylated and inactivated when dephosphorylated. Its function is as follows. Phosphorylates inhibitors of NF-kappa-B thus leading to the dissociation of the inhibitor/NF-kappa-B complex and ultimately the degradation of the inhibitor. Phosphorylates 'Ser-10' of histone H3 at NF-kappa-B-regulated promoters during inflammatory responses triggered by cytokines. The protein is Inhibitor of nuclear factor kappa-B kinase subunit alpha (CHUK) of Gallus gallus (Chicken).